The chain runs to 488 residues: MPSMLSLFYLAQSLFLLLLFPLYGHASVLKRGNNDPFYQPPAHWKSKQPGDILRWRKIEPKFIGGDFNVAEAYQLLYRTSQNTPNEPQHTVTTILVPHNAKKDILVVGSVAQDANGQQCTPSAGYTYNSESNFVFWLDETFFLQYLQEGYIMTIPDKEGPKNAFAAGRMEGYMTLDSIRATLNFSKLKLSSNTRIAGYGYSGGAITLGWASSLKPSYAPELNIIGWSFGGTPSNLLGTINHIDGTIFSGLILAGVTGVTDVYPEIHEYIQTVLNSAGREGLEFCRNHCLQEIILRYPLKSIYSYEFQTRGKDVFNNATVQQMFTDLTMGIRPHETPDVPVFMYHAQHDEIVPYDDAHKTAKAWCRNGAQVKFTTYSHYEMGHFTTEITGSVPAFHFIRDLFNGKEVSQGCDFKTEDTLFFNPSVLGGNANEIIDAILGIFGQRIGPEGRILAAKKTVVKGSKSGSSLKSHSHSQTHKHRKDVSTISNA.

Positions 1 to 26 (MPSMLSLFYLAQSLFLLLLFPLYGHA) are cleaved as a signal peptide. C119 and C288 form a disulfide bridge. A glycan (N-linked (GlcNAc...) asparagine) is linked at N183. Catalysis depends on S201, which acts as the Nucleophile. N316 carries N-linked (GlcNAc...) asparagine glycosylation. Active-site residues include D348 and H382. The tract at residues 461-488 (SKSGSSLKSHSHSQTHKHRKDVSTISNA) is disordered. The segment covering 469-480 (SHSHSQTHKHRK) has biased composition (basic residues).

This sequence belongs to the AB hydrolase superfamily. Lipase family. Class Lip subfamily.

The protein localises to the secreted. The catalysed reaction is a triacylglycerol + H2O = a diacylglycerol + a fatty acid + H(+). The enzyme catalyses a monoacylglycerol + H2O = glycerol + a fatty acid + H(+). It carries out the reaction a diacylglycerol + H2O = a monoacylglycerol + a fatty acid + H(+). Inhibited by different metal ions including Fe(2+), Fe(3+), Cu(2+), and Zn(2+). The monovalent ions Na(+) and K(+) exhibit less dramatic inhibition. Functionally, secreted lipase that releases free fatty acids from monoacylglycerol and triacylglycerol but has no phospholipase or lysophospholipase activities. Has minor esterase activity. Due to an absence of fatty acid synthase genes in Malassezia species, secretory lipases are essential for the yeast to generate free fatty acids from degradation of sebum and assimilate them as lipid sources for growth. Plays important roles not only in lipid metabolism but also in the immune response of host cells and pathogenesis. Hydrolyzes lipids, such as Tween 20, 40 and 80, with Tween 80 being the best substrate. The sequence is that of Secreted triacylglycerol lipase LIP1 from Malassezia furfur (Pityriasis versicolor infection agent).